A 436-amino-acid chain; its full sequence is Adenylosuccinate synthetase (436 aa).

Residues 12–18 and 40–42 contribute to the GTP site; these read GDEGKGK and GHT. The active-site Proton acceptor is the Asp13. Residues Asp13 and Gly40 each coordinate Mg(2+). IMP is bound by residues 13-16, 38-41, Thr128, Arg142, Gln223, Thr238, and Arg302; these read DEGK and NAGH. The active-site Proton donor is His41. 298 to 304 contributes to the substrate binding site; that stretch reads TTTGRRR. GTP-binding positions include Arg304, 330–332, and 412–414; these read KLD and SLG.

It belongs to the adenylosuccinate synthetase family. In terms of assembly, homodimer. It depends on Mg(2+) as a cofactor.

It is found in the cytoplasm. The enzyme catalyses IMP + L-aspartate + GTP = N(6)-(1,2-dicarboxyethyl)-AMP + GDP + phosphate + 2 H(+). It participates in purine metabolism; AMP biosynthesis via de novo pathway; AMP from IMP: step 1/2. Its function is as follows. Plays an important role in the de novo pathway of purine nucleotide biosynthesis. Catalyzes the first committed step in the biosynthesis of AMP from IMP. The protein is Adenylosuccinate synthetase of Prochlorococcus marinus (strain MIT 9312).